The chain runs to 348 residues: Fe-S cluster assembly protein DRE2 (348 aa).

An N-terminal SAM-like domain region spans residues 1–158 (MSQYKTGLLL…LPTFKKASSS (158 aa)). The tract at residues 137 to 170 (KTNNTKLQSGSKLPTFKKASSSTSNLPSFKKADH) is disordered. The span at 144–163 (QSGSKLPTFKKASSSTSNLP) shows a compositional bias: polar residues. A linker region spans residues 159 to 242 (TSNLPSFKKA…EEELIDEDGS (84 aa)). Serine 206 carries the post-translational modification Phosphoserine. 4 residues coordinate [2Fe-2S] cluster: cysteine 252, cysteine 263, cysteine 266, and cysteine 268. A fe-S binding site A region spans residues 252 to 268 (CGKSKTKKKKACKDCTC). Residues cysteine 311, cysteine 314, cysteine 322, and cysteine 325 each contribute to the [4Fe-4S] cluster site. Short sequence motifs (cx2C motif) lie at residues 311 to 314 (CGSC) and 322 to 325 (CSGC). The interval 311 to 325 (CGSCSLGDAFRCSGC) is fe-S binding site B.

The protein belongs to the anamorsin family. Monomer. Interacts with TAH18. Interacts with MIA40. [2Fe-2S] cluster serves as cofactor. [4Fe-4S] cluster is required as a cofactor. Ubiquitinated.

The protein resides in the cytoplasm. It is found in the mitochondrion intermembrane space. Its function is as follows. Component of the cytosolic iron-sulfur (Fe-S) protein assembly (CIA) machinery required for the maturation of extramitochondrial Fe-S proteins. Part of an electron transfer chain functioning in an early step of cytosolic Fe-S biogenesis, facilitating the de novo assembly of a [4Fe-4S] cluster on the scaffold complex CFD1-NBP35. Electrons are transferred to DRE2 from NADPH via the FAD- and FMN-containing protein TAH18. TAH18-DRE2 are also required for the assembly of the diferric tyrosyl radical cofactor of ribonucleotide reductase (RNR), probably by providing electrons for reduction during radical cofactor maturation in the catalytic small subunit RNR2. Has anti-apoptotic effects in the cell. Involved in negative control of H(2)O(2)-induced cell death. The sequence is that of Fe-S cluster assembly protein DRE2 from Saccharomyces cerevisiae (strain ATCC 204508 / S288c) (Baker's yeast).